The following is a 233-amino-acid chain: uncharacterized protein (233 aa).

This is an uncharacterized protein from Bacillus subtilis (strain 168).